Here is a 513-residue protein sequence, read N- to C-terminus: Na(+)/H(+) antiporter NhaB (513 aa).

12 consecutive transmembrane segments (helical) span residues 23 to 43 (LALIIFLIVNPLIFLISPFVA), 52 to 72 (IFTLAMALKCYPLLPGGLLAI), 97 to 117 (LLLMFMVAGIYFMKQLLLFIF), 120 to 140 (LLLSIRSKMLLSLSFCVAAAF), 144 to 164 (FLDALTVVAVVISVAVGFYGI), 202 to 222 (LMMHAGVGTALGGVMTMVGEP), 238 to 258 (FFLRMSPVTVPVLICGLLTCL), 303 to 323 (AIIGVWLVTALALHLAEVGLI), 348 to 368 (TESLPFTALLTVFFSVVAVII), 391 to 411 (LFYIFNGLLSSISDNVFVGTI), 447 to 467 (ATPNGQAAFLFLLTSALAPLI), and 475 to 495 (VWMALPYTLVLTLVGLLCVEF).

This sequence belongs to the NhaB Na(+)/H(+) (TC 2.A.34) antiporter family.

The protein resides in the cell inner membrane. The catalysed reaction is 2 Na(+)(in) + 3 H(+)(out) = 2 Na(+)(out) + 3 H(+)(in). In terms of biological role, na(+)/H(+) antiporter that extrudes sodium in exchange for external protons. This is Na(+)/H(+) antiporter NhaB from Escherichia coli O6:H1 (strain CFT073 / ATCC 700928 / UPEC).